A 389-amino-acid polypeptide reads, in one-letter code: Xylose isomerase (389 aa).

Active-site residues include His-101 and Asp-104. Mg(2+)-binding residues include Glu-232, Glu-268, His-271, Asp-296, Asp-307, and Asp-309.

This sequence belongs to the xylose isomerase family. As to quaternary structure, homotetramer. Mg(2+) is required as a cofactor.

It is found in the cytoplasm. It carries out the reaction alpha-D-xylose = alpha-D-xylulofuranose. In Lactococcus lactis subsp. cremoris (strain SK11), this protein is Xylose isomerase.